Reading from the N-terminus, the 276-residue chain is MDIRYEVGPKDFKTYTTEEMREAFLVESLFEEGALHLSYSHYDRLIIGGAVPSHEAIALDAGDALKTDYFLERRELAVINIGGKGTVTVGKDTYKMAKRDCLYVGRGNEHVEFASNDPQQPARFYLVSATAHQTYPTKLAPIGEAQPTKLGSDAESNNRTIYKYIHKDGIESCQLMVGMTLLEPNNMWNTMPAHLHDRRMEAYLYFDMEEDTRVFHFMGQPQETRHLVIKNEQAVISPPWSIHSGVGTSNYTFIWAMAGENYTFTDMDTVAMEELK.

Residues His194, His196, Glu201, and His243 each contribute to the Zn(2+) site.

The protein belongs to the KduI family. The cofactor is Zn(2+).

It catalyses the reaction 5-dehydro-4-deoxy-D-glucuronate = 3-deoxy-D-glycero-2,5-hexodiulosonate. Its pathway is glycan metabolism; pectin degradation; 2-dehydro-3-deoxy-D-gluconate from pectin: step 4/5. Functionally, catalyzes the isomerization of 5-dehydro-4-deoxy-D-glucuronate to 3-deoxy-D-glycero-2,5-hexodiulosonate. The polypeptide is 4-deoxy-L-threo-5-hexosulose-uronate ketol-isomerase (Shouchella clausii (strain KSM-K16) (Alkalihalobacillus clausii)).